The following is a 476-amino-acid chain: Beta-xylosidase (476 aa).

E188 serves as the catalytic Proton donor. E292 acts as the Nucleophile in catalysis. N-linked (GlcNAc...) asparagine glycosylation is present at N468.

It belongs to the glycosyl hydrolase 5 (cellulase A) family.

It is found in the secreted. It catalyses the reaction Hydrolysis of (1-&gt;4)-beta-D-xylans, to remove successive D-xylose residues from the non-reducing termini.. Catalyzes the hydrolysis of xylo-oligomers to xylose units and plays an important role in xylan degradation. Can also perform the transglycosylation of xylose and alcohol. Has no endoglucanase activity. The protein is Beta-xylosidase of Phanerodontia chrysosporium (White-rot fungus).